Consider the following 741-residue polypeptide: Cysteine--tRNA ligase, cytoplasmic (741 aa).

Zn(2+) is bound at residue Cys46. A 'HIGH' region motif is present at residues 48–58 (PTVYDASHMGH). Ser297 is subject to Phosphoserine. Zn(2+)-binding residues include Cys340, His365, and Glu369. The short motif at 398 to 402 (KMSKS) is the 'KMSKS' region element. Lys401 contributes to the ATP binding site.

The protein belongs to the class-I aminoacyl-tRNA synthetase family. Zn(2+) serves as cofactor.

Its subcellular location is the cytoplasm. It carries out the reaction tRNA(Cys) + L-cysteine + ATP = L-cysteinyl-tRNA(Cys) + AMP + diphosphate. This is Cysteine--tRNA ligase, cytoplasmic (Aats-cys) from Drosophila pseudoobscura pseudoobscura (Fruit fly).